The following is a 139-amino-acid chain: Plastocyanin (139 aa).

The signal sequence occupies residues 1 to 34 (MKLIAASLRRLSLAVLTVLLVVSSFAVFTPSASA). In terms of domain architecture, Plastocyanin-like spans 35–139 (ETYTVKLGSD…GMVGKITVAG (105 aa)). The Cu cation site is built by His-73, Cys-123, His-126, and Met-131.

The protein belongs to the plastocyanin family. Requires Cu(2+) as cofactor.

The protein resides in the cellular thylakoid membrane. Its function is as follows. Participates in electron transfer between P700 and the cytochrome b6-f complex in photosystem I. This Nostoc sp. (strain PCC 7120 / SAG 25.82 / UTEX 2576) protein is Plastocyanin (petE).